We begin with the raw amino-acid sequence, 3032 residues long: DmX-like protein 2 (3032 aa).

3 WD repeats span residues 108 to 145 (FLSSVTYNLAWDPQDNRLLTATDSIQLWAPPGGDILEE), 167 to 207 (KTSV…KSSI), and 230 to 278 (AHPR…EDCL). Position 326 is a phosphoserine (Ser-326). The interval 418-486 (QLDHESDDAD…HPRPSISMPL (69 aa)) is disordered. Residues 422–434 (ESDDADREDEERS) are compositionally biased toward acidic residues. Positions 435–474 (QDERERGLRMKLDHELSLDRESEAGTGSSEHEDGEREGSP) are enriched in basic and acidic residues. A Phosphoserine modification is found at Ser-473. The stretch at 492 to 532 (DRKIETLLTEWNKNPDMLFTIHPVDGTFLVWHVKYLDEYNP) is one WD 4 repeat. The tract at residues 577-598 (PSQQEMMSVDSPHGSQLHSPSH) is disordered. Position 587 is a phosphoserine (Ser-587). Residues 589–598 (HGSQLHSPSH) are compositionally biased toward polar residues. WD repeat units follow at residues 594-633 (HSPSHSTDMNILAPTVMMVSKHIDGSLNQWAVTFADKSAF), 750-802 (LHTS…RKLL), and 879-921 (QPSQ…VQAC). Residues 937–958 (VPGQKNLDSSPETSSSMSSVPH) form a disordered region. A phosphoserine mark is found at Ser-945 and Ser-946. The segment covering 945–958 (SSPETSSSMSSVPH) has biased composition (low complexity). A WD 8 repeat occupies 1001 to 1038 (LSSSSIYPVCLAPYLVVTTCSDNKVRFWKCCMETNSLG). 3 positions are modified to phosphoserine: Ser-1141, Ser-1144, and Ser-1152. 2 WD repeats span residues 1164 to 1205 (PNIK…VSDQ) and 1245 to 1285 (GTPS…GNVD). 2 positions are modified to phosphoserine: Ser-1288 and Ser-1399. The residue at position 1416 (Thr-1416) is a Phosphothreonine. Residues 1443-1464 (RISEDSTKKPQSYEDHIESQSE) form a disordered region. Over residues 1444–1461 (ISEDSTKKPQSYEDHIES) the composition is skewed to basic and acidic residues. Residue Ser-1856 is modified to Phosphoserine. The disordered stretch occupies residues 1922–1953 (QLDSVSGRMENGPSESKPVSRSDGGSGADWSA). Thr-2017 is modified (phosphothreonine). Residues 2117–2146 (GSYERHQIERRRLQAKREHAERRKLWLQKN) are a coiled coil. A phosphoserine mark is found at Ser-2394 and Ser-2636. Residues 2722-2732 (QPGAASHSSSQ) are compositionally biased toward low complexity. The segment at 2722–2744 (QPGAASHSSSQPHPPPSLPWLGS) is disordered. 6 WD repeats span residues 2757-2796 (RNLHNVKRMTSHPVHQYYLTGAQDGSVRMFEWTRPQQLVC), 2800-2839 (AGNARVTRLYFNSQGNKCGVADGEGFLSIWQVNQTASNPK), 2846-2888 (CHSK…GNSL), 2894-2933 (CHDHGATVLQYAPKQQLLISGGRKGYICIFDIRQRQLIHT), 2936-2975 (AHDSAIKALALDSCEEYFTTGSAEGNIKVWRLTGHGLIHS), and 2988-3026 (NIGAGVMQIAISQDNRLFSCGADGTLKTRVLPSAFNIPN).

Interacts with MADD and RAB3GAP. In terms of tissue distribution, expressed in the brain and pituitary gland. Detected in the hippocampus, dentate gyrus, hypothalamus, pyriform cortex and the granular and molecular layers of the cerebellum of adult animals. In the hypothalamus, expression is observed in the arcuate nucleus, the ME, the organum vasculosum of the lamina terminalis, and the subfornical organ, the subcommissural organ, and the suprachiasmatic nucleus. Both tanycytes and hypothalamic neurosecretory neurons express the protein. Expressed in the inner and outer hair cells as well as in the spiral ganglion neurons. Expressed in insulin-secreting cells of the islets of Langerhans in the pancreas.

Its subcellular location is the cytoplasmic vesicle. It is found in the secretory vesicle. The protein resides in the synaptic vesicle membrane. The protein localises to the neuronal dense core vesicle. In terms of biological role, may serve as a scaffold protein for MADD and RAB3GA on synaptic vesicles of neuronal and endocrine homeostatic processes. Plays a role in the brain as a key controller of neuronal and endocrine homeostatic processes. The polypeptide is DmX-like protein 2 (Dmxl2) (Mus musculus (Mouse)).